The sequence spans 309 residues: Taste receptor type 2 member 66 (309 aa).

A topological domain (extracellular) is located at residue Met-1. Residues 2-22 traverse the membrane as a helical segment; that stretch reads ITFLPIIFSILIVVTFVIGNF. At 23–46 the chain is on the cytoplasmic side; sequence ANGFIALANSIEWFKRQKISFADQ. A helical transmembrane segment spans residues 47-67; that stretch reads ILTALAVPRVGLLWVLLLNWY. Residues 68–86 are Extracellular-facing; the sequence is ATELNPAFYSIEVRITAYN. The helical transmembrane segment at 87–107 threads the bilayer; that stretch reads LWAVINHFSNWLATSLSIFYL. Over 108-126 the chain is Cytoplasmic; sequence LKIANFSNLIFLRLKRRVK. Residues 127–147 form a helical membrane-spanning segment; that stretch reads SVVLVILLGPLLFLVCHLFVI. Residues 148–178 lie on the Extracellular side of the membrane; the sequence is NMNQIIWTKEYEGNMTWKIKLRSAMYLSNTT. N-linked (GlcNAc...) asparagine glycosylation is found at Asn-161 and Asn-176. A helical membrane pass occupies residues 179 to 199; that stretch reads VTILANLVPFTVTLISFLLLV. Over 200–229 the chain is Cytoplasmic; sequence CSLCKHLKKMQLHGKGSQDPSTKVHIKALQ. Residues 230–250 traverse the membrane as a helical segment; sequence TVISFLLLCAIYFVSVIISVW. The Extracellular segment spans residues 251-259; sequence SFKNLENKP. Residues 260 to 280 form a helical membrane-spanning segment; sequence VFMFCQAIGFSCSSAHPFILI. Residues 281–309 lie on the Cytoplasmic side of the membrane; that stretch reads WGNKKLKQPFLSVLWQMRYWVKGEKPSSS.

The protein belongs to the G-protein coupled receptor T2R family.

The protein localises to the membrane. Its function is as follows. Receptor that may play a role in the perception of bitterness and is gustducin-linked. May play a role in sensing the chemical composition of the gastrointestinal content. The activity of this receptor may stimulate alpha gustducin, mediate PLC-beta-2 activation and lead to the gating of TRPM5. This is Taste receptor type 2 member 66 (TAS2R66) from Pan paniscus (Pygmy chimpanzee).